The sequence spans 163 residues: MRRLLIPLALWLGAVGVGVAELTEAQRRGLQVALEEFHKHPPVQWAFQETSVESAVDTPFPAGIFVRLEFKLQQTSCRKRDWKKPECKVRPNGRKRKCLACIKLGSEDKVLGRLVHCPIETQVLREPEEHQETQCIRVQRAGEDPHSFYFPGQFAFSKALPRS.

An N-terminal signal peptide occupies residues 1–20; the sequence is MRRLLIPLALWLGAVGVGVA. 3 disulfides stabilise this stretch: cysteine 77–cysteine 87, cysteine 98–cysteine 117, and cysteine 101–cysteine 135. Residues 158–163 constitute a propeptide that is removed on maturation; the sequence is KALPRS.

In terms of processing, secreted in an inactive precursor form, prochemerin, which is proteolytically processed by a variety of extracellular proteases to generate forms with differing levels of bioactivity. For example, the removal of six amino acids results in chemerin-157, which exhibits the highest activity, while removal of seven amino acids results in chemerin-156 which has slightly less activity. Some proteases are able to cleave at more than one site and chemerin forms may be sequentially processed by different enzymes to modulate activity levels. The coordinated expression and activity of chemerin-modifying enzymes is essential for regulating its bioactivation, inactivation and, consequently, biological function. Cathepsin G cleaves seven C-terminal amino acids from prochemerin (chemerin-156), elastase is able to cleave six (chemerin-157), eight (chemerin-155) or eleven (chemerin-152), plasmin cleaves five amino acids (chemerin-158), and tryptase cleaves five (chemerin-158) or eight (chemerin-155). Multiple cleavages might be required to fully activate chemerin, with an initial tryptase cleavage resulting in chemerin with low activity (chemerin-158), and a second cleavage by carboxypeptidase N or B producing highly active chemerin (chemerin-157).

Its subcellular location is the secreted. Functionally, adipocyte-secreted protein (adipokine) that regulates adipogenesis, metabolism and inflammation through activation of the chemokine-like receptor 1 (CMKLR1). Also acts as a ligand for CMKLR2. Can also bind to C-C chemokine receptor-like 2 (CCRL2), but with a lower affinity than it does to CMKLR1 or CMKLR2. Positively regulates adipocyte differentiation, modulates the expression of adipocyte genes involved in lipid and glucose metabolism and might play a role in angiogenesis, a process essential for the expansion of white adipose tissue. Also acts as a pro-inflammatory adipokine, causing an increase in secretion of pro-inflammatory and prodiabetic adipokines, which further impair adipose tissue metabolic function and have negative systemic effects including impaired insulin sensitivity, altered glucose and lipid metabolism, and a decrease in vascular function in other tissues. Can have both pro- and anti-inflammatory properties depending on the modality of enzymatic cleavage by different classes of proteases. Acts as a chemotactic factor for leukocyte populations expressing CMKLR1, particularly immature plasmacytoid dendritic cells, but also immature myeloid DCs, macrophages and natural killer cells. Exerts an anti-inflammatory role by preventing TNF/TNFA-induced VCAM1 expression and monocytes adhesion in vascular endothelial cells. The effect is mediated via inhibiting activation of NF-kappa-B and CRK/p38 through stimulation of AKT1/NOS3 signaling and nitric oxide production. Exhibits an antimicrobial function in the skin. This chain is Retinoic acid receptor responder protein 2 (RARRES2), found in Pongo abelii (Sumatran orangutan).